The primary structure comprises 191 residues: Calcium-binding protein CML42 (191 aa).

3 consecutive EF-hand domains span residues 25–60, 116–151, and 154–189; these read LNAL…LGLN, ENES…LGLP, and GEME…VVIP. Ca(2+) is bound by residues Asp-38, Asn-40, Asp-42, Glu-49, Asp-129, Asn-131, Asp-133, Glu-140, Asp-167, Asn-169, Asp-171, Arg-173, and Glu-178.

Interacts with KIC. As to expression, expressed in seedling shoots, roots, rosette leaves and flowers. Expressed in the leaf trichome support cells.

Probable calcium sensor that binds calcium in vitro. Involved in the regulation of trichome branching. The protein is Calcium-binding protein CML42 (CML42) of Arabidopsis thaliana (Mouse-ear cress).